The chain runs to 1313 residues: Target of rapamycin complex 1 subunit mip1 (1313 aa).

The interval 1-35 is disordered; the sequence is MNDRISEVSGSSRARRSVLSYGTTETGSDRYTENS. Phosphoserine occurs at positions 834, 837, and 882. WD repeat units follow at residues 986-1029, 1033-1074, 1087-1126, 1130-1170, 1176-1216, 1219-1259, and 1268-1308; these read TFNN…NSFK, SATT…KVEL, GDRN…CYAN, RSSN…RDSL, EHSS…SLQT, TDNS…NTFR, and PKPS…IHTD.

It belongs to the WD repeat RAPTOR family. In terms of assembly, the target of rapamycin complex 1 (TORC1) is composed of at least mip1, pop3/wat1, tco89, toc1 and tor2.

Its subcellular location is the cytoplasm. Component of TORC1, which regulates multiple cellular processes to control cell growth in response to environmental signals. Tor2 is essential for growth. Nutrient limitation and environmental stress signals cause inactivation of TORC1. Active TORC1 positively controls cell growth and ribosome biogenesis by regulating ribosomal protein gene expression. TORC1 negatively controls G1 cell-cycle arrest, sexual development and amino acid uptake. Represses mating, meiosis and sporulation efficiency by interfering with the functions of the transcription factor ste11 and the meiosis-promoting RNA-binding protein mei2. In Schizosaccharomyces pombe (strain 972 / ATCC 24843) (Fission yeast), this protein is Target of rapamycin complex 1 subunit mip1.